A 119-amino-acid polypeptide reads, in one-letter code: Lamprin 1.8-10 (119 aa).

The N-terminal stretch at 1–19 (MAATMQALLVIALLHLATA) is a signal peptide. A run of 7 repeats spans residues 41-45 (GGLGY), 46-50 (GGLGY), 51-55 (GGLGY), 56-60 (GGLGV), 61-65 (AGLGY), 66-70 (GGLGY), and 86-90 (GGLGY). Residues 41–90 (GGLGYGGLGYGGLGYGGLGVAGLGYGGLGYPGAALGGAYTHHAALGGLGY) are 7 X 5 AA approximate repeats.

In terms of assembly, the polymeric lamprin chains self-aggregate to form fibers and have secondary structures particularly rich in beta-sheets and in beta-turns.

The protein localises to the secreted. The protein resides in the extracellular space. Its subcellular location is the extracellular matrix. In terms of biological role, self-aggregating protein that is part of the soluble form of lamprin. The chain is Lamprin 1.8-10 from Petromyzon marinus (Sea lamprey).